Reading from the N-terminus, the 191-residue chain is Cathelicidin-related antimicrobial peptide Na_CRAMP (191 aa).

Positions 1 to 22 (MEGFFWKTLLVVGALTISGTSS) are cleaved as a signal peptide. A propeptide spanning residues 23–161 (FPHKPLTYEE…DQPKRVKRFK (139 aa)) is cleaved from the precursor. 2 cysteine pairs are disulfide-bonded: C81/C92 and C103/C120. The disordered stretch occupies residues 126–154 (EEEQKQEEGNEEEKEVEKEEKEEDQKDQP). Basic and acidic residues predominate over residues 140–154 (EVEKEEKEEDQKDQP).

Belongs to the cathelicidin family. In terms of tissue distribution, expressed by the venom gland.

Its subcellular location is the secreted. It localises to the target cell membrane. Potent antimicrobial peptide against most of Gram-negative bacteria, some Gram-positive bacteria (Bacillus) and some fungi. Adopts an amphipathic alpha helical conformation, that may allow to partition into the target membrane. No hemolytic and cytotoxic activities have been observed on mammalian cells. This chain is Cathelicidin-related antimicrobial peptide Na_CRAMP, found in Naja atra (Chinese cobra).